We begin with the raw amino-acid sequence, 507 residues long: ATP synthase subunit alpha, mitochondrial (507 aa).

171 to 178 (GDRQTGKT) is an ATP binding site.

The protein belongs to the ATPase alpha/beta chains family. As to quaternary structure, F-type ATPases have 2 components, CF(1) - the catalytic core - and CF(0) - the membrane proton channel. CF(1) has five subunits: alpha(3), beta(3), gamma(1), delta(1), epsilon(1). CF(0) has three main subunits: a, b and c.

The protein localises to the mitochondrion. Its subcellular location is the mitochondrion inner membrane. In terms of biological role, mitochondrial membrane ATP synthase (F(1)F(0) ATP synthase or Complex V) produces ATP from ADP in the presence of a proton gradient across the membrane which is generated by electron transport complexes of the respiratory chain. F-type ATPases consist of two structural domains, F(1) - containing the extramembraneous catalytic core, and F(0) - containing the membrane proton channel, linked together by a central stalk and a peripheral stalk. During catalysis, ATP synthesis in the catalytic domain of F(1) is coupled via a rotary mechanism of the central stalk subunits to proton translocation. Subunits alpha and beta form the catalytic core in F(1). Rotation of the central stalk against the surrounding alpha(3)beta(3) subunits leads to hydrolysis of ATP in three separate catalytic sites on the beta subunits. Subunit alpha does not bear the catalytic high-affinity ATP-binding sites. This chain is ATP synthase subunit alpha, mitochondrial (ATPA), found in Raphanus sativus (Radish).